The primary structure comprises 388 residues: Ferrochelatase (388 aa).

The Fe cation site is built by His196 and Glu277.

Belongs to the ferrochelatase family.

The protein localises to the cytoplasm. The enzyme catalyses heme b + 2 H(+) = protoporphyrin IX + Fe(2+). It participates in porphyrin-containing compound metabolism; protoheme biosynthesis; protoheme from protoporphyrin-IX: step 1/1. Its function is as follows. Catalyzes the ferrous insertion into protoporphyrin IX. This is Ferrochelatase from Nostoc sp. (strain PCC 7120 / SAG 25.82 / UTEX 2576).